We begin with the raw amino-acid sequence, 677 residues long: Zinc finger and BTB domain-containing protein 5 (677 aa).

The 70-residue stretch at 24–93 (CDCVIVVGNR…MYTSTLMLGE (70 aa)) folds into the BTB domain. Residues 158–181 (LNSSQNGEEQPAPMSSSMRSNLDQ) show a composition bias toward polar residues. 2 disordered regions span residues 158 to 252 (LNSS…MTDN) and 287 to 312 (SMASRATQVETSFDQEAAPEKSSFQC). Ser234 is modified (phosphoserine). Lys239 is covalently cross-linked (Glycyl lysine isopeptide (Lys-Gly) (interchain with G-Cter in SUMO2)). Polar residues predominate over residues 287-300 (SMASRATQVETSFD). Glycyl lysine isopeptide (Lys-Gly) (interchain with G-Cter in SUMO2) cross-links involve residues Lys322 and Lys330. A disordered region spans residues 331–387 (SEPLSSPEPQDEVSDVTSQAEGSESVEVEGVVVSAEKIDLSPESSDRSFSDPQSSTD). Over residues 350 to 365 (AEGSESVEVEGVVVSA) the composition is skewed to low complexity. Over residues 366–379 (EKIDLSPESSDRSF) the composition is skewed to basic and acidic residues. Ser371 carries the phosphoserine modification. Residues Lys404 and Lys415 each participate in a glycyl lysine isopeptide (Lys-Gly) (interchain with G-Cter in SUMO2) cross-link. Residues 447–474 (LLSPEAGPAGGPSSAPGSHVENPFSEPA) form a disordered region. Residues 449-464 (SPEAGPAGGPSSAPGS) are compositionally biased toward low complexity. Lys541 participates in a covalent cross-link: Glycyl lysine isopeptide (Lys-Gly) (interchain with G-Cter in SUMO2). The segment covering 552–576 (QIPENSTSSQLMMNGATSSFENGHP) has biased composition (polar residues). Residues 552-585 (QIPENSTSSQLMMNGATSSFENGHPSQPGPPQLT) form a disordered region. Residues Lys594 and Lys597 each participate in a glycyl lysine isopeptide (Lys-Gly) (interchain with G-Cter in SUMO2) cross-link. A C2H2-type 1 zinc finger spans residues 613 to 635 (YACKICCKTFLTLTDCKKHIRVH). The C2H2-type 2; atypical zinc finger occupies 641 to 664 (YACLKCGKRFSQSSHLYKHSKTTC). Glycyl lysine isopeptide (Lys-Gly) (interchain with G-Cter in SUMO2) cross-links involve residues Lys645 and Lys658.

It is found in the nucleus. Its function is as follows. May be involved in transcriptional regulation. The protein is Zinc finger and BTB domain-containing protein 5 (ZBTB5) of Homo sapiens (Human).